Reading from the N-terminus, the 507-residue chain is MEEIKEMGPTLPACPPCVMVIFGATGDLTARKLFPALYNLTKEGRLSENFVCVGFARRPKSHEQFREEMRQAIQNFSHSSEIDIRVWESLEHRIFYHQANFSEAEGYSSLRSFLESVDQKYGTKGNRLFYLSTPPDYFQEIIRNLNRHQLFYHEQGAQQPWSRLIIEKPFGVDLQTAQELQQCIDANINEESVYRIDHYLGKETVQNILTIRFANTLFESCWNSQYIDHVQISVSESIGIGSRGNFFEKSGMLRDMVQNHLMQLLCLLTMEPPSEFSSAEIKKEKIKILKKILPIREEDVIRGQYGEGVVQGVSVSGYREEENVDPNSLVETYVALKLFIDNPRWKGVPFYLQAGKRLPKRTTDIAVIFKKSSYDLFNSENCPLCPLENDLLIIRIQPDEGVALQFNCKVPGTNKLVRPVKMDFRYDSYFNTVTPEAYERLLCDCILGDRTLFTSNEEVLASWELFSPLLEQWSKIRPIFPNYIAGSLRPQGADELLSRDGRAWRSY.

Arg-57 and Lys-168 together coordinate NADP(+). Positions 198, 202, 236, and 255 each coordinate substrate. His-260 serves as the catalytic Proton acceptor. Lys-356 is a substrate binding site.

Belongs to the glucose-6-phosphate dehydrogenase family.

The catalysed reaction is D-glucose 6-phosphate + NADP(+) = 6-phospho-D-glucono-1,5-lactone + NADPH + H(+). The protein operates within carbohydrate degradation; pentose phosphate pathway; D-ribulose 5-phosphate from D-glucose 6-phosphate (oxidative stage): step 1/3. In terms of biological role, catalyzes the oxidation of glucose 6-phosphate to 6-phosphogluconolactone. In Chlamydia muridarum (strain MoPn / Nigg), this protein is Glucose-6-phosphate 1-dehydrogenase.